Reading from the N-terminus, the 476-residue chain is Protein transport protein Sec61 subunit alpha-like 1 (476 aa).

At 2-33 the chain is on the cytoplasmic side; that stretch reads AIKFLEVIKPFCAVLPEIQKPERKIQFREKVL. The chain crosses the membrane as a helical span at residues 34–53; sequence WTAITLFIFLVCCQIPLFGI. The Lumenal segment spans residues 54–76; that stretch reads MSSDSADPFYWMRVILASNRGTL. Residues 77 to 96 form a helical membrane-spanning segment; the sequence is MELGISPIVTSGLIMQLLAG. Topologically, residues 97-117 are cytoplasmic; it reads AKIIEVGDTPKDRALFNGAQK. The helical transmembrane segment at 118 to 138 threads the bilayer; that stretch reads LFGMIITIGQAIVYVMTGMYG. At 139–144 the chain is on the lumenal side; the sequence is DPSEMG. A helical transmembrane segment spans residues 145–165; sequence AGICLLIIIQLFVAGLIVLLL. Residues 166–172 are Cytoplasmic-facing; the sequence is DELLQKG. A helical transmembrane segment spans residues 173 to 193; that stretch reads YGLGSGISLFIATNICETIVW. Residues 194 to 240 lie on the Lumenal side of the membrane; sequence KAFSPTTVNTGRGTEFEGAIIALFHLLATRTDKVRALREAFYRQNLP. Residues 241 to 261 traverse the membrane as a helical segment; that stretch reads NLMNLIATVFVFAVVIYFQGF. Residues 262–288 are Cytoplasmic-facing; that stretch reads RVDLPIKSARYRGQYNTYPIKLFYTSN. A helical transmembrane segment spans residues 289–309; that stretch reads IPIILQSALVSNLYVISQMLS. Over 310-354 the chain is Lumenal; that stretch reads TRFSGNFLVNLLGTWSDTSSGGPARAYPVGGLCYYLSPPESFGSV. A helical membrane pass occupies residues 355 to 375; it reads LDDPVHAVIYIVFMLGSCAFF. Over 376-420 the chain is Cytoplasmic; it reads SKTWIEVSGSSAKDVAKQLKEQQMVMRGHRETSMVHELNRYIPTA. Residues 421 to 441 form a helical membrane-spanning segment; that stretch reads AAFGGLCIGGLSVMADFLGAI. Over 442–445 the chain is Lumenal; it reads GSGT. Residues 446–462 traverse the membrane as a helical segment; it reads GILLAVTIIYQYFEIFV. Residues 463-476 lie on the Cytoplasmic side of the membrane; the sequence is KEQSEVGSMGALLF.

Belongs to the SecY/SEC61-alpha family. The SEC61 channel-forming translocon complex consists of channel-forming core components SEC61A1, SEC61B and SEC61G and different auxiliary components such as SEC62 and SEC63. The SEC61 channel associates with the multi-pass translocon (MPT) complex.

Its subcellular location is the endoplasmic reticulum membrane. In terms of biological role, component of SEC61 channel-forming translocon complex that mediates transport of signal peptide-containing precursor polypeptides across the endoplasmic reticulum (ER). Forms a ribosome receptor and a gated pore in the ER membrane, both functions required for cotranslational translocation of nascent polypeptides. May cooperate with auxiliary protein SEC62, SEC63 and HSPA5/BiP to enable post-translational transport of small presecretory proteins. The SEC61 channel is also involved in ER membrane insertion of transmembrane proteins: it mediates membrane insertion of the first few transmembrane segments of proteins, while insertion of subsequent transmembrane regions of multi-pass membrane proteins is mediated by the multi-pass translocon (MPT) complex. Plays a role in the pronephric kidney tubule development. This Danio rerio (Zebrafish) protein is Protein transport protein Sec61 subunit alpha-like 1 (sec61al1).